Here is a 478-residue protein sequence, read N- to C-terminus: Glycogen synthase (478 aa).

Residue Lys-20 participates in ADP-alpha-D-glucose binding.

It belongs to the glycosyltransferase 1 family. Bacterial/plant glycogen synthase subfamily.

The catalysed reaction is [(1-&gt;4)-alpha-D-glucosyl](n) + ADP-alpha-D-glucose = [(1-&gt;4)-alpha-D-glucosyl](n+1) + ADP + H(+). The protein operates within glycan biosynthesis; glycogen biosynthesis. Functionally, synthesizes alpha-1,4-glucan chains using ADP-glucose. The chain is Glycogen synthase from Cereibacter sphaeroides (strain ATCC 17023 / DSM 158 / JCM 6121 / CCUG 31486 / LMG 2827 / NBRC 12203 / NCIMB 8253 / ATH 2.4.1.) (Rhodobacter sphaeroides).